Here is a 199-residue protein sequence, read N- to C-terminus: Protein GrpE (199 aa).

Residues 20–52 form a disordered region; that stretch reads YKVENEILEEETDEESQHQEPALGHPSYTALEE.

The protein belongs to the GrpE family. Homodimer.

The protein localises to the cytoplasm. Participates actively in the response to hyperosmotic and heat shock by preventing the aggregation of stress-denatured proteins, in association with DnaK and GrpE. It is the nucleotide exchange factor for DnaK and may function as a thermosensor. Unfolded proteins bind initially to DnaJ; upon interaction with the DnaJ-bound protein, DnaK hydrolyzes its bound ATP, resulting in the formation of a stable complex. GrpE releases ADP from DnaK; ATP binding to DnaK triggers the release of the substrate protein, thus completing the reaction cycle. Several rounds of ATP-dependent interactions between DnaJ, DnaK and GrpE are required for fully efficient folding. This chain is Protein GrpE, found in Legionella pneumophila (strain Corby).